The sequence spans 657 residues: 1-deoxy-D-xylulose-5-phosphate synthase (657 aa).

Thiamine diphosphate is bound by residues His-73 and 113-115 (SHA). Asp-145 serves as a coordination point for Mg(2+). Residues 146–147 (GA), Asn-175, Tyr-293, and Glu-375 contribute to the thiamine diphosphate site. Asn-175 is a binding site for Mg(2+).

The protein belongs to the transketolase family. DXPS subfamily. As to quaternary structure, homodimer. Mg(2+) is required as a cofactor. The cofactor is thiamine diphosphate.

The enzyme catalyses D-glyceraldehyde 3-phosphate + pyruvate + H(+) = 1-deoxy-D-xylulose 5-phosphate + CO2. It functions in the pathway metabolic intermediate biosynthesis; 1-deoxy-D-xylulose 5-phosphate biosynthesis; 1-deoxy-D-xylulose 5-phosphate from D-glyceraldehyde 3-phosphate and pyruvate: step 1/1. In terms of biological role, catalyzes the acyloin condensation reaction between C atoms 2 and 3 of pyruvate and glyceraldehyde 3-phosphate to yield 1-deoxy-D-xylulose-5-phosphate (DXP). In Renibacterium salmoninarum (strain ATCC 33209 / DSM 20767 / JCM 11484 / NBRC 15589 / NCIMB 2235), this protein is 1-deoxy-D-xylulose-5-phosphate synthase.